The chain runs to 444 residues: ATP-dependent protease ATPase subunit HslU (444 aa).

ATP-binding positions include isoleucine 20 and 62–67 (GVGKTE). Residues 137 to 162 (LVPPSRGTSGEPERGEDSNARQTFRK) are disordered. Residues aspartate 257, glutamate 322, and arginine 394 each contribute to the ATP site.

Belongs to the ClpX chaperone family. HslU subfamily. In terms of assembly, a double ring-shaped homohexamer of HslV is capped on each side by a ring-shaped HslU homohexamer. The assembly of the HslU/HslV complex is dependent on binding of ATP.

The protein localises to the cytoplasm. Functionally, ATPase subunit of a proteasome-like degradation complex; this subunit has chaperone activity. The binding of ATP and its subsequent hydrolysis by HslU are essential for unfolding of protein substrates subsequently hydrolyzed by HslV. HslU recognizes the N-terminal part of its protein substrates and unfolds these before they are guided to HslV for hydrolysis. The chain is ATP-dependent protease ATPase subunit HslU from Bordetella petrii (strain ATCC BAA-461 / DSM 12804 / CCUG 43448).